The chain runs to 734 residues: Ribosome-releasing factor 2, mitochondrial (734 aa).

The transit peptide at 1-25 (MLQYCLLRRYRFLLRQHAQVIKRCY) directs the protein to the mitochondrion. The region spanning 27–303 (GDIRNIGILA…AVNAYLPMPE (277 aa)) is the tr-type G domain. GTP is bound by residues 36 to 43 (AHIDAGKT), 100 to 104 (DTPGH), and 154 to 157 (NKMD).

Belongs to the TRAFAC class translation factor GTPase superfamily. Classic translation factor GTPase family. EF-G/EF-2 subfamily.

The protein localises to the mitochondrion. In terms of biological role, mitochondrial GTPase that mediates the disassembly of ribosomes from messenger RNA at the termination of mitochondrial protein biosynthesis. Not involved in the GTP-dependent ribosomal translocation step during translation elongation. The polypeptide is Ribosome-releasing factor 2, mitochondrial (Drosophila grimshawi (Hawaiian fruit fly)).